Here is a 389-residue protein sequence, read N- to C-terminus: Smad nuclear interacting protein 1 (389 aa).

The segment covering 1 to 10 (MKAGKSERER) has biased composition (basic and acidic residues). The disordered stretch occupies residues 1–212 (MKAGKSERER…GNKNKEVPVK (212 aa)). S18 bears the Phosphoserine mark. K28 is covalently cross-linked (Glycyl lysine isopeptide (Lys-Gly) (interchain with G-Cter in SUMO); alternate). K28 participates in a covalent cross-link: Glycyl lysine isopeptide (Lys-Gly) (interchain with G-Cter in SUMO1); alternate. A Glycyl lysine isopeptide (Lys-Gly) (interchain with G-Cter in SUMO2); alternate cross-link involves residue K28. The span at 28–43 (KQERLSPEPVAHRRPD) shows a compositional bias: basic and acidic residues. A phosphoserine mark is found at S33 and S48. The span at 54–72 (AESGSAGHRGSRARGASRS) shows a compositional bias: low complexity. Basic residues predominate over residues 73 to 95 (PAKKKSKSSGRRSKSPRTKRSRS). S95 is subject to Phosphoserine. Basic and acidic residues-rich tracts occupy residues 103–138 (VKQE…ERDR) and 147–163 (RSSD…DRDS). A Glycyl lysine isopeptide (Lys-Gly) (interchain with G-Cter in SUMO2) cross-link involves residue K104. S149 carries the phosphoserine modification. Residues 166–197 (LQAQEEERDFNNARRREHRQQNESAGAEAQEV) adopt a coiled-coil conformation. A Glycyl lysine isopeptide (Lys-Gly) (interchain with G-Cter in SUMO2) cross-link involves residue K214. The region spanning 272–335 (YLLGRHRRIA…NGTFLNNKRI (64 aa)) is the FHA domain. A compositionally biased stretch (basic and acidic residues) spans 363–373 (ESSDTSELDRK). The segment at 363-389 (ESSDTSELDRKEDEDEEEEEEMVSDSS) is disordered. The segment covering 374-389 (EDEDEEEEEEMVSDSS) has biased composition (acidic residues). Phosphoserine is present on S386.

Component of activated spliceosome complexes. Component of the minor spliceosome, which splices U12-type introns. Binds SMAD4 and CREBBP/EP300. Binds the SMAD1/OAZ1/PSMB4 complex. Interacts with DROSHA and SMARCA4. Component of the SNARP complex which consists at least of SNIP1, SNW1, THRAP3, BCLAF1 and PNN. Degraded by the proteasome upon binding to the SMAD1/OAZ1/PSMB4 complex.

The protein resides in the nucleus. Required for pre-mRNA splicing as component of the spliceosome. As a component of the minor spliceosome, involved in the splicing of U12-type introns in pre-mRNAs. Down-regulates NF-kappa-B signaling by competing with RELA for CREBBP/EP300 binding. Involved in the microRNA (miRNA) biogenesis. May be involved in cyclin-D1/CCND1 mRNA stability through the SNARP complex which associates with both the 3'end of the CCND1 gene and its mRNA. In Rattus norvegicus (Rat), this protein is Smad nuclear interacting protein 1 (Snip1).